Reading from the N-terminus, the 134-residue chain is Submaxillary gland androgen-regulated protein 3A (134 aa).

The first 22 residues, 1–22 (MKSLTWILGLWALAACFTPGES), serve as a signal peptide directing secretion. Positions 19 to 134 (PGESQRGPRG…TDPALPTPAP (116 aa)) are disordered. Composition is skewed to pro residues over residues 28–43 (GPYPPGPLAPPPPPCF), 50–85 (VPPPHPPPYGPGRFPPPLSPPYGPGRIPPSPPPPYG), and 94–119 (LPPPYGPGYPQPPSQPRPYPPGPPFF).

It belongs to the PROL1/PROL3 family.

The protein resides in the secreted. Its function is as follows. May play a role in protection or detoxification. The sequence is that of Submaxillary gland androgen-regulated protein 3A (SMR3A) from Homo sapiens (Human).